A 454-amino-acid polypeptide reads, in one-letter code: CCA-adding enzyme (454 aa).

ATP-binding residues include Ser-53 and Lys-56. CTP contacts are provided by Ser-53 and Lys-56. 3 residues coordinate Mg(2+): Asp-65, Asp-67, and Asp-119. ATP contacts are provided by His-142, Lys-161, and Tyr-170. 3 residues coordinate CTP: His-142, Lys-161, and Tyr-170.

Belongs to the tRNA nucleotidyltransferase/poly(A) polymerase family. Archaeal CCA-adding enzyme subfamily. As to quaternary structure, homodimer. It depends on Mg(2+) as a cofactor.

It carries out the reaction a tRNA precursor + 2 CTP + ATP = a tRNA with a 3' CCA end + 3 diphosphate. It catalyses the reaction a tRNA with a 3' CCA end + 2 CTP + ATP = a tRNA with a 3' CCACCA end + 3 diphosphate. Catalyzes the addition and repair of the essential 3'-terminal CCA sequence in tRNAs without using a nucleic acid template. Adds these three nucleotides in the order of C, C, and A to the tRNA nucleotide-73, using CTP and ATP as substrates and producing inorganic pyrophosphate. tRNA 3'-terminal CCA addition is required both for tRNA processing and repair. Also involved in tRNA surveillance by mediating tandem CCA addition to generate a CCACCA at the 3' terminus of unstable tRNAs. While stable tRNAs receive only 3'-terminal CCA, unstable tRNAs are marked with CCACCA and rapidly degraded. The chain is CCA-adding enzyme from Thermococcus gammatolerans (strain DSM 15229 / JCM 11827 / EJ3).